The following is a 148-amino-acid chain: 3-hydroxyacyl-[acyl-carrier-protein] dehydratase FabZ (148 aa).

Residue His-48 is part of the active site.

It belongs to the thioester dehydratase family. FabZ subfamily.

Its subcellular location is the cytoplasm. The catalysed reaction is a (3R)-hydroxyacyl-[ACP] = a (2E)-enoyl-[ACP] + H2O. In terms of biological role, involved in unsaturated fatty acids biosynthesis. Catalyzes the dehydration of short chain beta-hydroxyacyl-ACPs and long chain saturated and unsaturated beta-hydroxyacyl-ACPs. This chain is 3-hydroxyacyl-[acyl-carrier-protein] dehydratase FabZ, found in Nitratiruptor sp. (strain SB155-2).